The primary structure comprises 123 residues: Large ribosomal subunit protein bL12 (123 aa).

Belongs to the bacterial ribosomal protein bL12 family. In terms of assembly, homodimer. Part of the ribosomal stalk of the 50S ribosomal subunit. Forms a multimeric L10(L12)X complex, where L10 forms an elongated spine to which 2 to 4 L12 dimers bind in a sequential fashion. Binds GTP-bound translation factors.

In terms of biological role, forms part of the ribosomal stalk which helps the ribosome interact with GTP-bound translation factors. Is thus essential for accurate translation. The chain is Large ribosomal subunit protein bL12 from Albidiferax ferrireducens (strain ATCC BAA-621 / DSM 15236 / T118) (Rhodoferax ferrireducens).